The chain runs to 377 residues: Chaperone protein DnaJ (377 aa).

The 66-residue stretch at 4-69 folds into the J domain; that stretch reads DYYEVLGVSK…EKRARYDQMG (66 aa). A CR-type zinc finger spans residues 131–213; it reads GTEKEIQVPR…CSGKGTTRKV (83 aa). 8 residues coordinate Zn(2+): Cys-144, Cys-147, Cys-161, Cys-164, Cys-187, Cys-190, Cys-201, and Cys-204. 4 CXXCXGXG motif repeats span residues 144–151, 161–168, 187–194, and 201–208; these read CTECHGSG, CSQCHGTG, CPACNGSG, and CKECSGKG.

This sequence belongs to the DnaJ family. In terms of assembly, homodimer. Requires Zn(2+) as cofactor.

Its subcellular location is the cytoplasm. Participates actively in the response to hyperosmotic and heat shock by preventing the aggregation of stress-denatured proteins and by disaggregating proteins, also in an autonomous, DnaK-independent fashion. Unfolded proteins bind initially to DnaJ; upon interaction with the DnaJ-bound protein, DnaK hydrolyzes its bound ATP, resulting in the formation of a stable complex. GrpE releases ADP from DnaK; ATP binding to DnaK triggers the release of the substrate protein, thus completing the reaction cycle. Several rounds of ATP-dependent interactions between DnaJ, DnaK and GrpE are required for fully efficient folding. Also involved, together with DnaK and GrpE, in the DNA replication of plasmids through activation of initiation proteins. This Desulfitobacterium hafniense (strain DSM 10664 / DCB-2) protein is Chaperone protein DnaJ.